The sequence spans 260 residues: NH(3)-dependent NAD(+) synthetase (260 aa).

Residue 31–38 participates in ATP binding; sequence GLSGGLDS. Residue Asp-37 participates in Mg(2+) binding. Arg-112 is a binding site for deamido-NAD(+). Residue Thr-132 coordinates ATP. Glu-137 is a binding site for Mg(2+). Lys-161 and Ser-183 together coordinate ATP.

Belongs to the NAD synthetase family. As to quaternary structure, homodimer.

It carries out the reaction deamido-NAD(+) + NH4(+) + ATP = AMP + diphosphate + NAD(+) + H(+). It participates in cofactor biosynthesis; NAD(+) biosynthesis; NAD(+) from deamido-NAD(+) (ammonia route): step 1/1. Functionally, catalyzes the ATP-dependent amidation of deamido-NAD to form NAD. Uses ammonia as a nitrogen source. The protein is NH(3)-dependent NAD(+) synthetase of Helicobacter pylori (strain P12).